The following is a 566-amino-acid chain: KsdD-like steroid dehydrogenase Rv0785 (566 aa).

23-54 serves as a coordination point for FAD; that stretch reads DAIVVGAGLAGLVAACELADRGLRVLILDQEN.

It belongs to the FAD-dependent oxidoreductase 2 family. The cofactor is FAD.

It functions in the pathway lipid metabolism; steroid biosynthesis. Its function is as follows. Able to catalyze the elimination of the C-1 and C-2 hydrogen atoms of the A-ring from the polycyclic ring structure of 3-ketosteroids. The chain is KsdD-like steroid dehydrogenase Rv0785 from Mycobacterium tuberculosis (strain ATCC 25618 / H37Rv).